Consider the following 199-residue polypeptide: Putative peroxiredoxin ycf42 (199 aa).

In terms of domain architecture, Thioredoxin spans 8–165; it reads LQVGQIAPDF…TLRVLQAIQY (158 aa). The active-site Cysteine sulfenic acid (-SOH) intermediate is the C53.

The protein belongs to the peroxiredoxin family. AhpC/Prx1 subfamily. Homodimer; disulfide-linked, upon oxidation. The Cys-53-SH group is the primary site of oxidation by H(2)O(2), and the oxidized Cys-53 (probably Cys-SOH) rapidly reacts with Cys-174-SH of the other subunit to form an intermolecular disulfide. This disulfide is subsequently reduced by thioredoxin.

It localises to the plastid. The protein resides in the chloroplast. The enzyme catalyses a hydroperoxide + [thioredoxin]-dithiol = an alcohol + [thioredoxin]-disulfide + H2O. In terms of biological role, thiol-specific peroxidase that catalyzes the reduction of hydrogen peroxide and organic hydroperoxides to water and alcohols, respectively. Plays a role in cell protection against oxidative stress by detoxifying peroxides. The sequence is that of Putative peroxiredoxin ycf42 (ycf42) from Porphyra purpurea (Red seaweed).